Reading from the N-terminus, the 387-residue chain is ATP-dependent Clp protease proteolytic subunit-related protein 1, chloroplastic (387 aa).

The N-terminal 41 residues, 1–41 (MATALVSPLTSQLNHEAVCSKFVLPKSPFMSGSKLFSSNMP), are a transit peptide targeting the chloroplast. A compositionally biased stretch (basic and acidic residues) spans 355 to 365 (QDSSFEKRDYD). The segment at 355 to 387 (QDSSFEKRDYDGTLAQRAMRPGGGSPAAPAGLR) is disordered.

Belongs to the peptidase S14 family. As to quaternary structure, component of the chloroplastic Clp protease core complex which consist of at least 16 proteins: CLPP4 (3 copies), CLPP5 (3 copies), CLPR4 (2 copies), ClpP1 (1 copy), CLPP6 (1 copy), CLPR2 (1 copy), CLPT1 (1 copy), CLPT2 (1 copy) and 3 copies of CLPP3 and/or CLPR1 and/or CLPR3. The core complex is organized in two heptameric rings, one containing CLPP3,4,5,6 in a 1:2:3:1 ratio and the other CLPP1 and CLPR1,2,3,4 in a 3:1:1:1:1 ratio.

It localises to the plastid. The protein resides in the chloroplast stroma. Its function is as follows. Required for chloroplast development and differentiation. This Arabidopsis thaliana (Mouse-ear cress) protein is ATP-dependent Clp protease proteolytic subunit-related protein 1, chloroplastic.